A 441-amino-acid polypeptide reads, in one-letter code: Fibroleukin (441 aa).

The first 15 residues, 1 to 15 (MKLANWCWLSSTVLA), serve as a signal peptide directing secretion. N-linked (GlcNAc...) asparagine glycosylation is present at N25. Residues 73–167 (SRIEEVFKEV…LEKLNLVNMN (95 aa)) are a coiled coil. Residues 102 to 128 (QADDSRDPGRNGLLLPGTGAPGETGDN) are disordered. N-linked (GlcNAc...) asparagine glycans are attached at residues N179, N237, N265, and N338. Residues 206–438 (VQQHLIYKDC…EVKMMIRPKH (233 aa)) form the Fibrinogen C-terminal domain.

As to quaternary structure, homotetramer; disulfide-linked.

The protein localises to the secreted. Its function is as follows. May play a role in physiologic lymphocyte functions at mucosal sites. This chain is Fibroleukin (FGL2), found in Bos taurus (Bovine).